Reading from the N-terminus, the 107-residue chain is uncharacterized protein (107 aa).

2 consecutive transmembrane segments (helical) span residues 5 to 25 (WTII…VINV) and 42 to 62 (ILVI…VGIF). Residues 82–92 (IHKQEDTHLAD) show a composition bias toward basic and acidic residues. Positions 82–107 (IHKQEDTHLADQTDTQDASAMIEKKD) are disordered.

It is found in the cell membrane. This is an uncharacterized protein from Bacillus subtilis (strain 168).